Here is a 231-residue protein sequence, read N- to C-terminus: Ninja-family protein AFP3 (231 aa).

The span at 83-96 shows a compositional bias: basic residues; it reads AKRKRSEKQRKHKA. Residues 83–152 are disordered; it reads AKRKRSEKQR…SAQSQPENLG (70 aa). Polar residues predominate over residues 130–152; that stretch reads QATTNKSVETSPSSAQSQPENLG.

It belongs to the Ninja family. As to quaternary structure, forms a heterodimer with AFP2. Interacts with ABI5/DPBF1, DPBF2, AREB3/DPBF3, EEL/DPBF4, ABF1, ABF3/DPBF5 and ABF4/AREB2.

The protein localises to the nucleus. Its function is as follows. Acts as a negative regulator of abscisic acid (ABA) response and stress responses. This Arabidopsis thaliana (Mouse-ear cress) protein is Ninja-family protein AFP3 (AFP3).